The primary structure comprises 280 residues: Hydroxyethylthiazole kinase (280 aa).

M50 is a binding site for substrate. K125 and T178 together coordinate ATP. Residue G205 participates in substrate binding.

The protein belongs to the Thz kinase family. Requires Mg(2+) as cofactor.

The catalysed reaction is 5-(2-hydroxyethyl)-4-methylthiazole + ATP = 4-methyl-5-(2-phosphooxyethyl)-thiazole + ADP + H(+). It functions in the pathway cofactor biosynthesis; thiamine diphosphate biosynthesis; 4-methyl-5-(2-phosphoethyl)-thiazole from 5-(2-hydroxyethyl)-4-methylthiazole: step 1/1. Its function is as follows. Catalyzes the phosphorylation of the hydroxyl group of 4-methyl-5-beta-hydroxyethylthiazole (THZ). This chain is Hydroxyethylthiazole kinase, found in Lacticaseibacillus paracasei (strain ATCC 334 / BCRC 17002 / CCUG 31169 / CIP 107868 / KCTC 3260 / NRRL B-441) (Lactobacillus paracasei).